The primary structure comprises 208 residues: MQTLRRQAAWPCVPRGTLEVDFPPPLYSDDYLSQEGPRWTPAIKQATRWKYTPMGRDAAGQLWYTGLTNSDSREAWYTLPRAPDSPYREAYARWHGCYGHRERSLPSAYTQRLRETAWYDPIIPAQYTDPSTRWGSVLWKDRPIRGKEFAINRHRFGVEALWRASDYVRYLSAPQRPRYTAQNYRQWGLEPYCPATNQRPPPVYTPSH.

In terms of assembly, microtubule inner protein component of sperm flagellar doublet microtubules. In terms of tissue distribution, expressed in trachea multiciliated cells.

It is found in the cytoplasm. Its subcellular location is the cytoskeleton. The protein localises to the cilium axoneme. The protein resides in the flagellum axoneme. In terms of biological role, microtubule inner protein (MIP) part of the dynein-decorated doublet microtubules (DMTs) in cilia axoneme, which is required for motile cilia beating. Located at the center of the tektin bundle where may function to recruit tektins or stabilize the bundle. This chain is Tektin bundle-interacting protein 1 (TEKTIP1), found in Bos taurus (Bovine).